Consider the following 155-residue polypeptide: MKIWIDADACPRVIKEIVFRASERLRIPVCLVANKNLAKHATHLVESIVVGEGFDVADDYIADHAAPEDLVITADIPLAARIVAIGGVALDPRGELYTEENVGERLSMRDLMMELREGGLVQGGPSQFSLTDRQRFASSLDRLLTRLIREMRPVS.

The protein belongs to the UPF0178 family.

The protein is UPF0178 protein Gmet_1725 of Geobacter metallireducens (strain ATCC 53774 / DSM 7210 / GS-15).